The chain runs to 336 residues: Glyceraldehyde-3-phosphate dehydrogenase, chromosomal (336 aa).

NAD(+)-binding positions include 12–13 (RI), Asp-37, Arg-81, and Ser-123. D-glyceraldehyde 3-phosphate is bound by residues 154–156 (SCT) and Thr-185. The Nucleophile role is filled by Cys-155. An NAD(+)-binding site is contributed by Asn-186. Residues Arg-200, 213-214 (TG), and Arg-236 contribute to the D-glyceraldehyde 3-phosphate site. An NAD(+)-binding site is contributed by Asn-317.

The protein belongs to the glyceraldehyde-3-phosphate dehydrogenase family. Homotetramer.

The catalysed reaction is D-glyceraldehyde 3-phosphate + phosphate + NAD(+) = (2R)-3-phospho-glyceroyl phosphate + NADH + H(+). It participates in carbohydrate biosynthesis; Calvin cycle. Could be involved in carbon fixation as a component of the Calvin cycle. Catalyzes the oxidative phosphorylation of glyceraldehyde 3-phosphate (G3P) to 1,3-bisphosphoglycerate (BPG) using the cofactor NAD. The first reaction step involves the formation of a hemiacetal intermediate between G3P and a cysteine residue, and this hemiacetal intermediate is then oxidized to a thioester, with concomitant reduction of NAD to NADH. The reduced NADH is then exchanged with the second NAD, and the thioester is attacked by a nucleophilic inorganic phosphate to produce BPG. The polypeptide is Glyceraldehyde-3-phosphate dehydrogenase, chromosomal (cbbGC) (Cupriavidus necator (strain ATCC 17699 / DSM 428 / KCTC 22496 / NCIMB 10442 / H16 / Stanier 337) (Ralstonia eutropha)).